The sequence spans 988 residues: Voltage-gated delayed rectifier potassium channel KCNH5 (988 aa).

At 1–217 (MPGGKRGLVA…LHYCAFKTTW (217 aa)) the chain is on the cytoplasmic side. Residues 14-86 (TFLENIVRRS…TIEKVRQTFD (73 aa)) enclose the PAS domain. In terms of domain architecture, PAC spans 91–143 (NCFEVLLYKKNRTPVWFYMQIAPIRNEHEKVVLFLCTFKDITLFKQPIEDDST). Residues 218–238 (DWVILILTFYTAIMVPYNVSF) form a helical membrane-spanning segment. Over 239-243 (KTKQN) the chain is Extracellular. The chain crosses the membrane as a helical span at residues 244 to 264 (NIAWLVLDSVVDVIFLVDIVL). Topologically, residues 265-291 (NFHTTFVGPGGEVISDPKLIRMNYLKT) are cytoplasmic. A helical transmembrane segment spans residues 292-312 (WFVIDLLSCLPYDIINAFENV). Residues 313-319 (DEGISSL) are Extracellular-facing. A helical; Voltage-sensor transmembrane segment spans residues 320–340 (FSSLKVVRLLRLGRVARKLDH). The Cytoplasmic segment spans residues 341–346 (YLEYGA). Residues 347 to 367 (AVLVLLVCVFGLVAHWLACIW) traverse the membrane as a helical segment. Topologically, residues 368–419 (YSIGDYEVIDEVTNTIQIDSWLYQLALSIGTPYRYNTSAGIWEGGPSKDSLY) are extracellular. Residue N403 is glycosylated (N-linked (GlcNAc...) asparagine). The pore-forming intramembrane region spans 420-440 (VSSLYFTMTSLTTIGFGNIAP). The Selectivity filter motif lies at 432-437 (TIGFGN). The Extracellular portion of the chain corresponds to 441 to 446 (TTDVEK). A helical transmembrane segment spans residues 447–467 (MFSVAMMMVGSLLYATIFGNV). At 468 to 988 (TTIFQQMYAN…PESDKDEINF (521 aa)) the chain is on the cytoplasmic side. 550–667 (AFRLASDGCL…NSFSRNLTLT (118 aa)) is an a nucleoside 3',5'-cyclic phosphate binding site. Positions 704-715 (HPVRKLFQKFKQ) are calmodulin-binding. The disordered stretch occupies residues 718–742 (ELRNQGSAQSDPERSQLQVESRPLQ). Residues 721-742 (NQGSAQSDPERSQLQVESRPLQ) are compositionally biased toward polar residues. K785 is covalently cross-linked (Glycyl lysine isopeptide (Lys-Gly) (interchain with G-Cter in ubiquitin)). 2 disordered regions span residues 839–897 (LLSE…AKHP) and 946–965 (SVPQ…PPQI). A compositionally biased stretch (basic and acidic residues) spans 871-885 (SDLRLDKAGEARSPL). S883 is modified (phosphoserine). Positions 909 to 948 (TLQEVKHELKEDIQLLSCRMTALEKQVAEILKLLSEKSVP) are CAD (involved in subunit assembly).

It belongs to the potassium channel family. H (Eag) (TC 1.A.1.20) subfamily. Kv10.2/KCNH5 sub-subfamily. Homotetramer. The potassium channel is probably composed of a homo- or heterotetrameric complex of pore-forming alpha subunits that can associate with modulating beta subunits. Heteromultimer with KCNH1/EAG. As to expression, detected in adult testis and in embryonic and adult brain, but not in other tissues. Highly expressed in specific brain areas, such as neocortex, olfactory bulb, primary olfactory cortex and brain stem. In cortex, expression is concentrated in a narrow band toward the middle lamella (layer IV). Moderately expressed in spinal cord, dorsal thalamic nuclei, medial hypothalamus, colliculus, lateral lemniscus, pontine nuclei and Islands of Calleja.

Its subcellular location is the membrane. It carries out the reaction K(+)(in) = K(+)(out). Its activity is regulated as follows. Inhibited by low nanomolar concentrations of cytosolic calcium. In terms of biological role, pore-forming (alpha) subunit of a voltage-gated delayed rectifier potassium channel that mediates outward-rectifying potassium currents which, on depolarization, reaches a steady-state level and do not inactivate. The kinetic is characterized by a slow activation time course and a small voltage dependence of the activation time constants, therefore, starts to open at more negative voltages. The activation kinetics depend on the prepulse potential and external divalent cation concentration. The time course of activation is biphasic with a fast and a slowly activating current component. With negative prepulses, the current activation is delayed and slowed down several fold, whereas more positive prepulses speed up activation, therefore the activation rate depends on holding potential. This Rattus norvegicus (Rat) protein is Voltage-gated delayed rectifier potassium channel KCNH5.